A 317-amino-acid polypeptide reads, in one-letter code: Melanocyte-stimulating hormone receptor (317 aa).

Residues 1–23 are disordered; that stretch reads MSGQGPQRRLLGSPNATSPTTPH. The Extracellular portion of the chain corresponds to 1–37; that stretch reads MSGQGPQRRLLGSPNATSPTTPHFKLAANQTGPRCLE. N-linked (GlcNAc...) asparagine glycosylation occurs at N29. A helical transmembrane segment spans residues 38-63; that stretch reads VSIPNGLFLSLGLVSVVENVLVVAAI. Topologically, residues 64–72 are cytoplasmic; sequence AKNRNLHSP. Residues 73–93 form a helical membrane-spanning segment; the sequence is MYYFIGCLAVSDLLVSVTNVL. Over 94-118 the chain is Extracellular; sequence ETAVMLLVEAGALAAQAAVVQQLDD. Residues 119 to 140 traverse the membrane as a helical segment; it reads IIDVLICGSMVSSLCFLGAIAV. Residues 141–163 are Cytoplasmic-facing; sequence DRYLSIFYALRYHSIVTLPRAWR. Residues 164–183 traverse the membrane as a helical segment; sequence AISAIWVASVLSSTLFIAYY. The Extracellular portion of the chain corresponds to 184–191; that stretch reads NHTAVLLC. A helical transmembrane segment spans residues 192–211; the sequence is LVSFFVAMLVLMAVLYVHML. Topologically, residues 212–240 are cytoplasmic; it reads ARARQHARGIARLRKRQHSVHQGFGLKGA. The helical transmembrane segment at 241 to 266 threads the bilayer; that stretch reads ATLTILLGIFFLCWGPFFLHLSLMVL. Residues 267 to 279 lie on the Extracellular side of the membrane; sequence CPQHPICGCVFQN. Residues 280–300 traverse the membrane as a helical segment; it reads FNLFLTLIICNSIIDPFIYAF. At 301–317 the chain is on the cytoplasmic side; sequence RSQELRKTLQEVVLCSW. C315 carries S-palmitoyl cysteine lipidation.

This sequence belongs to the G-protein coupled receptor 1 family. Interacts with MGRN1, but does not undergo MGRN1-mediated ubiquitination; this interaction competes with GNAS-binding and thus inhibits agonist-induced cAMP production. Interacts with OPN3; the interaction results in a decrease in MC1R-mediated cAMP signaling and ultimately a decrease in melanin production in melanocytes.

The protein localises to the cell membrane. Receptor for MSH (alpha, beta and gamma) and ACTH. The activity of this receptor is mediated by G proteins which activate adenylate cyclase. Mediates melanogenesis, the production of eumelanin (black/brown) and phaeomelanin (red/yellow), via regulation of cAMP signaling in melanocytes. This is Melanocyte-stimulating hormone receptor (MC1R) from Vulpes vulpes (Red fox).